The sequence spans 534 residues: (E)-beta-farnesene synthase (534 aa).

Asp-287, Asp-291, Asn-431, Ser-435, and Glu-439 together coordinate Mg(2+). A DDXXD motif motif is present at residues 287–291; the sequence is DDMMD.

This sequence belongs to the terpene synthase family. Requires Mg(2+) as cofactor. The cofactor is Co(2+). Mn(2+) is required as a cofactor.

The protein resides in the cytoplasm. It carries out the reaction (2E,6E)-farnesyl diphosphate = (E)-beta-farnesene + diphosphate. The protein operates within secondary metabolite biosynthesis; terpenoid biosynthesis. Its function is as follows. Sesquiterpene cyclase catalyzing the production of beta-farnesene and alpha-bergamotene in equal amounts from farnesyl diphosphate. Involved in indirect defense by producing volatile signals attracting natural enemies of herbivores. This chain is (E)-beta-farnesene synthase, found in Zea mays subsp. mexicana (Mexican teosinte).